Consider the following 309-residue polypeptide: General transcription factor IIH subunit 3 (309 aa).

Residues 269–286 (CSVCLSIFCNFSPICTTC) form a C4-type zinc finger.

The protein belongs to the TFB4 family. In terms of assembly, part of a TFIID-containing RNA polymerase II pre-initiation complex that is composed of TBP and at least GTF2A1, GTF2A2, GTF2E1, GTF2E2, GTF2F1, GTF2H2, GTF2H3, GTF2H4, GTF2H5, GTF2B, TCEA1, ERCC2, ERCC3, TAF1, TAF2, TAF3, TAF4, TAF5, TAF6, TAF7, TAF8, TAF9, TAF10, TAF11, TAF12 and TAF13. Component of the 7-subunit TFIIH core complex composed of XPB/ERCC3, XPD/ERCC2, GTF2H1, GTF2H2, GTF2H3, GTF2H4 and GTF2H5, which is active in NER. The core complex associates with the 3-subunit CDK-activating kinase (CAK) module composed of CCNH/cyclin H, CDK7 and MNAT1 to form the 10-subunit holoenzyme (holo-TFIIH) active in transcription. Interacts with RARA; the interaction requires prior phosphorylation of RARA on 'Ser-369' which then enhances interaction of RARA with CDK7.

The protein resides in the nucleus. In terms of biological role, component of the general transcription and DNA repair factor IIH (TFIIH) core complex, which is involved in general and transcription-coupled nucleotide excision repair (NER) of damaged DNA and, when complexed to CAK, in RNA transcription by RNA polymerase II. In NER, TFIIH acts by opening DNA around the lesion to allow the excision of the damaged oligonucleotide and its replacement by a new DNA fragment. In transcription, TFIIH has an essential role in transcription initiation. When the pre-initiation complex (PIC) has been established, TFIIH is required for promoter opening and promoter escape. Phosphorylation of the C-terminal tail (CTD) of the largest subunit of RNA polymerase II by the kinase module CAK controls the initiation of transcription. This chain is General transcription factor IIH subunit 3 (Gtf2h3), found in Mus musculus (Mouse).